Reading from the N-terminus, the 484-residue chain is Argininosuccinate lyase (484 aa).

The protein belongs to the lyase 1 family. Argininosuccinate lyase subfamily.

It localises to the cytoplasm. It catalyses the reaction 2-(N(omega)-L-arginino)succinate = fumarate + L-arginine. It functions in the pathway amino-acid biosynthesis; L-arginine biosynthesis; L-arginine from L-ornithine and carbamoyl phosphate: step 3/3. The protein is Argininosuccinate lyase of Methanocaldococcus jannaschii (strain ATCC 43067 / DSM 2661 / JAL-1 / JCM 10045 / NBRC 100440) (Methanococcus jannaschii).